The chain runs to 266 residues: 5'-nucleotidase SurE (266 aa).

Positions 8, 9, 39, and 93 each coordinate a divalent metal cation.

This sequence belongs to the SurE nucleotidase family. The cofactor is a divalent metal cation.

It is found in the cytoplasm. The catalysed reaction is a ribonucleoside 5'-phosphate + H2O = a ribonucleoside + phosphate. In terms of biological role, nucleotidase that shows phosphatase activity on nucleoside 5'-monophosphates. The chain is 5'-nucleotidase SurE from Pyrobaculum arsenaticum (strain DSM 13514 / JCM 11321 / PZ6).